The chain runs to 181 residues: MAETATIARPYAEALFRVASESSAGNLGAWSELVSEMGQVAANPDMKAVADDPNVPGDKLAELFLSVLKSPVSDEARRFVQLLVENGRLTVMPDIAEQFHALKNAREGSSDVEITSAFPLEDGQLNDLVAALERKFGRKLYAQVAVDPSLIGGVSVKVGDEVLDTSVRARLAAMQTALTAA.

Belongs to the ATPase delta chain family. In terms of assembly, F-type ATPases have 2 components, F(1) - the catalytic core - and F(0) - the membrane proton channel. F(1) has five subunits: alpha(3), beta(3), gamma(1), delta(1), epsilon(1). F(0) has three main subunits: a(1), b(2) and c(10-14). The alpha and beta chains form an alternating ring which encloses part of the gamma chain. F(1) is attached to F(0) by a central stalk formed by the gamma and epsilon chains, while a peripheral stalk is formed by the delta and b chains.

The protein localises to the cell inner membrane. Its function is as follows. F(1)F(0) ATP synthase produces ATP from ADP in the presence of a proton or sodium gradient. F-type ATPases consist of two structural domains, F(1) containing the extramembraneous catalytic core and F(0) containing the membrane proton channel, linked together by a central stalk and a peripheral stalk. During catalysis, ATP synthesis in the catalytic domain of F(1) is coupled via a rotary mechanism of the central stalk subunits to proton translocation. Functionally, this protein is part of the stalk that links CF(0) to CF(1). It either transmits conformational changes from CF(0) to CF(1) or is implicated in proton conduction. The polypeptide is ATP synthase subunit delta (Cupriavidus taiwanensis (strain DSM 17343 / BCRC 17206 / CCUG 44338 / CIP 107171 / LMG 19424 / R1) (Ralstonia taiwanensis (strain LMG 19424))).